The chain runs to 303 residues: Heme A synthase (303 aa).

Residues 1 to 8 are Cytoplasmic-facing; sequence MFGKKNLK. Residues 9-29 form a helical membrane-spanning segment; it reads WLGVVATLMMTFVQLGGALVT. Residues 30–67 lie on the Extracellular side of the membrane; the sequence is KTGSADGCGSSWPLCHGALIPEFFPIDTIIELSHRAVS. A disulfide bond links C37 and C44. E60 is a catalytic residue. H63 serves as a coordination point for heme o. Residues 68–88 traverse the membrane as a helical segment; that stretch reads ALSLLMVLWLVITAWKHIGYI. Topologically, residues 89 to 93 are cytoplasmic; it reads KEIKP. Residues 94–114 form a helical membrane-spanning segment; that stretch reads LSIISVGFLLLQALIGAAAVI. Topologically, residues 115-125 are extracellular; that stretch reads WQQNDYVLALH. H125 lines the heme o pocket. The helical transmembrane segment at 126 to 146 threads the bilayer; that stretch reads FGISLISFSSVFLITLIIFSI. Residues 147-163 lie on the Cytoplasmic side of the membrane; that stretch reads DQKYEAAELYIKKPLRR. Residues 164-184 form a helical membrane-spanning segment; sequence LTWLMAIIIYCGVYTGALVRH. At 185–215 the chain is on the extracellular side; that stretch reads ADASLAYGGWPLPFHDLVPHSEQDWVQLTHR. H214 serves as a coordination point for heme b. Residues 216-236 traverse the membrane as a helical segment; the sequence is IMAFIVFTIIMITYIHAVKNY. Residues 237 to 244 are Cytoplasmic-facing; it reads PNNRTVHY. The helical transmembrane segment at 245–265 threads the bilayer; the sequence is GYTAAFILVILQVITGALSIM. Residues 266 to 270 are Extracellular-facing; it reads TNVNL. The chain crosses the membrane as a helical span at residues 271 to 291; it reads IIALFHALFITYLFGMTTYFI. H276 contributes to the heme b binding site. Residues 292-303 are Cytoplasmic-facing; the sequence is MLMLRSVRSDKQ.

The protein belongs to the COX15/CtaA family. Type 1 subfamily. In terms of assembly, interacts with CtaB. The cofactor is heme b.

It is found in the cell membrane. The catalysed reaction is Fe(II)-heme o + 2 A + H2O = Fe(II)-heme a + 2 AH2. Its pathway is porphyrin-containing compound metabolism; heme A biosynthesis; heme A from heme O: step 1/1. Catalyzes the conversion of heme O to heme A by two successive hydroxylations of the methyl group at C8. The first hydroxylation forms heme I, the second hydroxylation results in an unstable dihydroxymethyl group, which spontaneously dehydrates, resulting in the formyl group of heme A. This chain is Heme A synthase, found in Staphylococcus aureus (strain bovine RF122 / ET3-1).